We begin with the raw amino-acid sequence, 810 residues long: Volume-regulated anion channel subunit LRRC8A (810 aa).

M1 is modified (N-acetylmethionine). The Cytoplasmic portion of the chain corresponds to 1–23; that stretch reads MIPVTELRYFADTQPAYRILKPW. The chain crosses the membrane as a helical span at residues 24 to 47; the sequence is WDVFTDYISIVMLMIAVFGGTLQV. Residues 48–123 are Extracellular-facing; that stretch reads TQDKMICLPC…YENRLHWFAK (76 aa). Cystine bridges form between C54–C310, C57–C65, and C113–C295. N66 and N83 each carry an N-linked (GlcNAc...) asparagine glycan. A helical transmembrane segment spans residues 124–142; that stretch reads YFPYLVLLHTLIFLACSNF. Over 143–264 the chain is Cytoplasmic; that stretch reads WFKFPRTSSK…EEGDIVYRLY (122 aa). Phosphothreonine is present on T200. S202 carries the phosphoserine modification. T215 carries the post-translational modification Phosphothreonine. Residue S217 is modified to Phosphoserine. Residues 265 to 286 traverse the membrane as a helical segment; that stretch reads MRQTIIKVIKFILIICYTVYYV. Residues 287–316 lie on the Extracellular side of the membrane; sequence HNIKFDVDCTVDIESLTGYRTYRCAHPLAT. A helical transmembrane segment spans residues 317–341; it reads LFKILASFYISLVIFYGLICMYTLW. Topologically, residues 342–810 are cytoplasmic; the sequence is WMLRRSLKKY…RLWRADKEQA (469 aa). LRR repeat units lie at residues 399 to 422, 423 to 445, 447 to 468, 469 to 492, 493 to 515, 518 to 542, 543 to 565, 567 to 589, 590 to 613, 615 to 637, 639 to 661, 662 to 684, 686 to 707, 708 to 730, 732 to 753, 754 to 776, and 778 to 801; these read ENKLRQLNLNNEWTLDKLRQRLTK, NAQDKLELHLFMLSGIPDTVFDL, ELEVLKLELIPDVTIPPSIAQL, TGLKELWLYHTAAKIEAPALAFLR, ENLRALHIKFTDIKEIPLWIYSL, LEELHLTGNLSAENNRYIVIDGLRE, LKRLKVLRLKSNLSKLPQVVTDV, VHLQKLSINNEGTKLIVLNSLKK, MANLTELELIRCDLERIPHSIFSL, NLQEIDLKDNNLKTIEEIISFQH, HRLTCLKLWYNHIAYIPIQIGNL, TNLERLYLNRNKIEKIPTQLFYC, KLRYLDLSHNNLTFLPADIGLL, QNLQNLAITANRIETLPPELFQC, KLRALHLGNNVLQSLPSRVGEL, TNLTQIELRGNRLECLPVELGEC, and LLKRSGLVVEEDLFNTLPPEVKER. The Di-leucine motif motif lies at 706 to 707; it reads LL.

It belongs to the LRRC8 family. As to quaternary structure, heterohexamer; oligomerizes with other LRRC8 proteins (LRRC8B, LRRC8C, LRRC8D and/or LRRC8E) to form a heterohexamer. Can form homohexamers in vitro, but these have lower conductance than heterohexamers. In vivo, the subunit composition may depend primarily on expression levels, and heterooligomeric channels containing various proportions of the different LRRC8 proteins may coexist. Interact with GRB2. Interacts with NOX4; this interaction prevents the ubiquitin-mediated degradation of LRRC8A. N-glycosylated. Expressed in brain, kidney, ovary, lung, liver, heart, and fetal brain and liver. Found at high levels in bone marrow; lower levels are detected in peripheral blood cells. Expressed on T-cells as well as on B-lineage cells.

It is found in the cell membrane. It localises to the lysosome membrane. It catalyses the reaction chloride(in) = chloride(out). The catalysed reaction is iodide(out) = iodide(in). The enzyme catalyses taurine(out) = taurine(in). It carries out the reaction L-aspartate(out) = L-aspartate(in). It catalyses the reaction L-glutamate(out) = L-glutamate(in). The catalysed reaction is myo-inositol(out) = myo-inositol(in). The enzyme catalyses 2',3'-cGAMP(out) = 2',3'-cGAMP(in). Inhibited by (4-[(2-butyl-6,7-dichloro-2-cyclopentyl-2,3-dihydro-1-oxo-1H-inden-5-yl)oxy]butanoic acid), which plugs the channel like a cork in a bottle by binding in the extracellular selectivity filter and sterically occluding ion conduction. Lipids may block conduction in closed heterohexameric channels. Functionally, essential component of the volume-regulated anion channel (VRAC, also named VSOAC channel), an anion channel required to maintain a constant cell volume in response to extracellular or intracellular osmotic changes. The VRAC channel conducts iodide better than chloride and can also conduct organic osmolytes like taurine. Mediates efflux of amino acids, such as aspartate and glutamate, in response to osmotic stress. LRRC8A and LRRC8D are required for the uptake of the drug cisplatin. In complex with LRRC8C or LRRC8E, acts as a transporter of immunoreactive cyclic dinucleotide GMP-AMP (2'-3'-cGAMP), an immune messenger produced in response to DNA virus in the cytosol: mediates both import and export of 2'-3'-cGAMP, thereby promoting transfer of 2'-3'-cGAMP to bystander cells. In contrast, complexes containing LRRC8D inhibit transport of 2'-3'-cGAMP. Required for in vivo channel activity, together with at least one other family member (LRRC8B, LRRC8C, LRRC8D or LRRC8E); channel characteristics depend on the precise subunit composition. Can form functional channels by itself (in vitro). Involved in B-cell development: required for the pro-B cell to pre-B cell transition. Also required for T-cell development. Required for myoblast differentiation: VRAC activity promotes membrane hyperpolarization and regulates insulin-stimulated glucose metabolism and oxygen consumption. Also acts as a regulator of glucose-sensing in pancreatic beta cells: VRAC currents, generated in response to hypotonicity- or glucose-induced beta cell swelling, depolarize cells, thereby causing electrical excitation, leading to increase glucose sensitivity and insulin secretion. Also plays a role in lysosome homeostasis by forming functional lysosomal VRAC channels in response to low cytoplasmic ionic strength condition: lysosomal VRAC channels are necessary for the formation of large lysosome-derived vacuoles, which store and then expel excess water to maintain cytosolic water homeostasis. Acts as a key factor in NLRP3 inflammasome activation by modulating itaconate efflux and mitochondria function. This is Volume-regulated anion channel subunit LRRC8A from Homo sapiens (Human).